We begin with the raw amino-acid sequence, 73 residues long: Cell division protein ZapB (73 aa).

Residues 3 to 69 (LELLSKLETK…EKVTGLVGLL (67 aa)) adopt a coiled-coil conformation. Residues 30-50 (EKQKSSTLSEHNQQLNEQNQQ) are disordered. Over residues 41 to 50 (NQQLNEQNQQ) the composition is skewed to low complexity.

This sequence belongs to the ZapB family. Homodimer. The ends of the coiled-coil dimer bind to each other, forming polymers. Interacts with FtsZ.

It is found in the cytoplasm. Its function is as follows. Non-essential, abundant cell division factor that is required for proper Z-ring formation. It is recruited early to the divisome by direct interaction with FtsZ, stimulating Z-ring assembly and thereby promoting cell division earlier in the cell cycle. Its recruitment to the Z-ring requires functional FtsA or ZipA. This Shewanella putrefaciens (strain CN-32 / ATCC BAA-453) protein is Cell division protein ZapB.